A 260-amino-acid chain; its full sequence is Sphinganine C4-monooxygenase 1 (260 aa).

Transmembrane regions (helical) follow at residues 11–31 (LLGTVAPIVVYWLYSGIYVAL), 55–75 (SVVKGVLVQQVVQAVVAILLF), and 92–112 (FLVLARQFVTAMIVLDTWQYF). A Fatty acid hydroxylase domain is found at 99 to 235 (FVTAMIVLDT…FVMWDRILGT (137 aa)). A Histidine box-1 motif is present at residues 114 to 118 (HRYMH). The Histidine box-2 signature appears at 128-132 (HSQHH). Positions 207–213 (YHDIHHQ) match the Histidine box-3 motif.

It belongs to the sterol desaturase family. Fe cation serves as cofactor. Ubiquitous, with higher levels in flowers and roots.

The protein resides in the endoplasmic reticulum membrane. The enzyme catalyses a dihydroceramide + 2 Fe(II)-[cytochrome b5] + O2 + 2 H(+) = a phytoceramide + 2 Fe(III)-[cytochrome b5] + H2O. Its pathway is membrane lipid metabolism; sphingolipid biosynthesis. Functionally, involved in sphingolipid trihydroxy long-chain base (4-hydroxysphinganine) biosynthesis. Can use C18- and C20-sphinganine as substrates to produce C18- and C20-phytosphinganines (D-ribo-2-amino-1,3,4-trihydroxyoctadecane and -eicosane). In Arabidopsis thaliana (Mouse-ear cress), this protein is Sphinganine C4-monooxygenase 1 (SBH1).